A 507-amino-acid polypeptide reads, in one-letter code: ATP synthase subunit alpha, chloroplastic (507 aa).

170-177 (GDRQTGKT) provides a ligand contact to ATP.

The protein belongs to the ATPase alpha/beta chains family. As to quaternary structure, F-type ATPases have 2 components, CF(1) - the catalytic core - and CF(0) - the membrane proton channel. CF(1) has five subunits: alpha(3), beta(3), gamma(1), delta(1), epsilon(1). CF(0) has four main subunits: a, b, b' and c.

The protein localises to the plastid. It is found in the chloroplast thylakoid membrane. It carries out the reaction ATP + H2O + 4 H(+)(in) = ADP + phosphate + 5 H(+)(out). Produces ATP from ADP in the presence of a proton gradient across the membrane. The alpha chain is a regulatory subunit. This is ATP synthase subunit alpha, chloroplastic from Pelargonium hortorum (Common geranium).